The chain runs to 139 residues: D-ribose pyranase (139 aa).

H20 functions as the Proton donor in the catalytic mechanism. Substrate contacts are provided by residues D28, H106, and 128–130 (YAN).

It belongs to the RbsD / FucU family. RbsD subfamily. In terms of assembly, homodecamer.

It localises to the cytoplasm. The enzyme catalyses beta-D-ribopyranose = beta-D-ribofuranose. It participates in carbohydrate metabolism; D-ribose degradation; D-ribose 5-phosphate from beta-D-ribopyranose: step 1/2. Its function is as follows. Catalyzes the interconversion of beta-pyran and beta-furan forms of D-ribose. This is D-ribose pyranase from Salmonella paratyphi B (strain ATCC BAA-1250 / SPB7).